Reading from the N-terminus, the 461-residue chain is MESSKVILYPSPGIGHLVSMVELGKLIHTHHPSLSVIILVLPATYETGSTTTYINTVSTTTPFITFHHLPVIPLPPDSSSEFIDLAFDIPQLYNPVVYNTLVAISETSTIKAVILDFFVNAAFQISKSLDLPTYYFFTSGASGLCAFLHLPTIYKTYSGNFKDLDTFINIPGVPPIHSSDMPTVLFDKESNSYKNFVKTSNNMAKSSGVIANSFLQLEERAAQTLRDGKSITDGPSPPIYLIGPLIASGNQVDHNENECLKWLNTQPSKSVVFLCFGSQGVFKKEQLKEIAVGLERSGQRFLWVVRKPPSDGGKEFGLDDVLPEGFVARTKEKGLVVKNWAPQPAILGHESVGGFVSHCGWNSSLEAVVFGVPMVAWPLYAEQKMNRVYLVEEIKVALWLRMSADGFVSAEAVEETVRQLMDGRRVRERILEMSTKAKAAVEDGGSSRVDFFKLTESWTHK.

UDP-alpha-D-glucose is bound by residues Ser278, 340 to 341 (WA), 358 to 366 (HCGWNSSLE), and 380 to 383 (YAEQ).

It belongs to the UDP-glycosyltransferase family.

Functionally, may glycosylate diterpenes or flavonols in leaves. The polypeptide is UDP-glycosyltransferase 88B1 (Stevia rebaudiana (Stevia)).